A 288-amino-acid chain; its full sequence is Solute carrier family 25 member 45 (288 aa).

Solcar repeat units lie at residues 1 to 83 (MPVE…TLLA), 97 to 191 (PSYT…LCRQ), and 199 to 286 (PSSA…LLRL). Transmembrane regions (helical) follow at residues 6–26 (FVAG…FDTV), 58–78 (GMSF…GVYS), 102–122 (IFIA…PFDL), 166–186 (GSWA…VTYE), 202–222 (ATVL…ATPF), and 266–286 (SARA…LLRL).

Belongs to the mitochondrial carrier (TC 2.A.29) family. Widely expressed, with highest levels in testis, liver and kidney and low levels in brain, including cortex, cerebellum, hippocampus and hypothalamus, and heart.

It localises to the mitochondrion inner membrane. This Mus musculus (Mouse) protein is Solute carrier family 25 member 45 (Slc25a45).